The primary structure comprises 316 residues: Cysteine synthase (316 aa).

Residues N7 and R35 each contribute to the hydrogen sulfide site. K42 is subject to N6-(pyridoxal phosphate)lysine. Pyridoxal 5'-phosphate is bound by residues N72 and 177–181; that span reads GTGGS. L268 contacts hydrogen sulfide. S272 provides a ligand contact to pyridoxal 5'-phosphate.

The protein belongs to the cysteine synthase/cystathionine beta-synthase family. As to quaternary structure, homodimer. Requires pyridoxal 5'-phosphate as cofactor.

The catalysed reaction is O-acetyl-L-serine + hydrogen sulfide = L-cysteine + acetate. The protein operates within amino-acid biosynthesis; L-cysteine biosynthesis; L-cysteine from L-serine: step 2/2. The sequence is that of Cysteine synthase (cysK) from Haemophilus influenzae (strain ATCC 51907 / DSM 11121 / KW20 / Rd).